Here is a 1301-residue protein sequence, read N- to C-terminus: ABC transporter BEA3 (1301 aa).

The tract at residues 1-30 (MGKRTAENSAANGEGEEKHPEIGVDGRPEK) is disordered. Residues 15–30 (GEEKHPEIGVDGRPEK) show a composition bias toward basic and acidic residues. Helical transmembrane passes span 54–74 (VGVI…IVFG), 103–123 (LYLL…NFAF), 177–197 (LGVF…AFIY), and 203–223 (LVTF…LPYI). Residues 54-345 (VGVIASIGVG…ISTPLLAVSK (292 aa)) form the ABC transmembrane type-1 1 domain. Asn229 is a glycosylation site (N-linked (GlcNAc...) asparagine). The next 2 helical transmembrane spans lie at 281 to 301 (FIAL…GLAF) and 313 to 333 (INQL…VTAM). Residues 378-667 (IILEDVTFAY…EAGLYYNLVN (290 aa)) enclose the ABC transporter 1 domain. Residue 413-420 (GPSGSGKS) participates in ATP binding. The segment covering 442–454 (VEKPTDKKNNGGK) has biased composition (basic and acidic residues). The segment at 442 to 461 (VEKPTDKKNNGGKEEDEQEL) is disordered. Asn511 and Asn618 each carry an N-linked (GlcNAc...) asparagine glycan. Positions 682–708 (VIAKEERPSSVHEKAHTESTIEEKPLE) are disordered. The ABC transmembrane type-1 2 domain occupies 735-1024 (ALTLFFSACA…ALSFGPNVAQ (290 aa)). 6 consecutive transmembrane segments (helical) span residues 745 to 765 (GAAV…FGYL), 779 to 799 (SLMW…TFFL), 858 to 878 (SVFI…AFAW), 880 to 900 (LALV…YWRM), 961 to 981 (WVSL…AIVL), and 987 to 1007 (LLLS…SVLN). Positions 1060-1296 (IELENIYFKY…RGVYWQMCQS (237 aa)) constitute an ABC transporter 2 domain. 1094-1101 (GASGSGKS) is an ATP binding site.

Belongs to the ABC transporter superfamily. ABCB family. Multidrug resistance exporter (TC 3.A.1.201) subfamily.

It localises to the cell membrane. Functionally, ABC transporter; part of the gene cluster that mediates the biosynthesis of beauvericin (BEA), a non-ribosomal cyclic hexadepsipeptide that shows antibiotic, antifungal, insecticidal, and cancer cell antiproliferative and antihaptotactic activity. Functions as a regulator of beauvericin production, rather than in BEA transport out of the cell. Beauvericin has low toxicity to the producing fungus and BEA3 does not play a role in detoxification and self-protection of the producing fungus. The chain is ABC transporter BEA3 from Gibberella fujikuroi (strain CBS 195.34 / IMI 58289 / NRRL A-6831) (Bakanae and foot rot disease fungus).